The following is a 147-amino-acid chain: 3-dehydroquinate dehydratase (147 aa).

Y22 acts as the Proton acceptor in catalysis. Substrate contacts are provided by N74, H80, and D87. Catalysis depends on H101, which acts as the Proton donor. Residues 102–103 and R112 contribute to the substrate site; that span reads IS.

It belongs to the type-II 3-dehydroquinase family. In terms of assembly, homododecamer.

It carries out the reaction 3-dehydroquinate = 3-dehydroshikimate + H2O. The protein operates within metabolic intermediate biosynthesis; chorismate biosynthesis; chorismate from D-erythrose 4-phosphate and phosphoenolpyruvate: step 3/7. Functionally, catalyzes a trans-dehydration via an enolate intermediate. This is 3-dehydroquinate dehydratase from Lachnospira eligens (strain ATCC 27750 / DSM 3376 / VPI C15-48 / C15-B4) (Eubacterium eligens).